A 426-amino-acid chain; its full sequence is Docking protein 3 (426 aa).

Residues Pro-4–Phe-115 enclose the PH domain. An IRS-type PTB domain is found at Asp-145–Pro-249. The disordered stretch occupies residues Gln-243 to His-282. Polar residues predominate over residues Glu-247–Pro-260. Position 331 is a phosphotyrosine (Tyr-331). The segment at Gly-357–Ser-426 is disordered. Basic residues predominate over residues Lys-402–Leu-411.

It belongs to the DOK family. Type A subfamily. As to quaternary structure, homooligomer. Interacts with GRB2 and INPP5D/SHIP. In terms of processing, tyrosine-phosphorylated in the presence of GRB2.

Its subcellular location is the cytoplasm. It is found in the cell membrane. DOK proteins are enzymatically inert adaptor or scaffolding proteins. They provide a docking platform for the assembly of multimolecular signaling complexes. Plays a role as negative regulator of the mobilization of calcium ions and of calcium signaling. The polypeptide is Docking protein 3 (DOK3) (Gallus gallus (Chicken)).